Here is a 1030-residue protein sequence, read N- to C-terminus: Kinesin-related protein 6 (1030 aa).

Residues 3 to 66 enclose the SAM domain; the sequence is FENDQLYNWL…FHLLQQLKKQ (64 aa). Disordered stretches follow at residues 66–164 and 178–308; these read QTPP…SDFM and RQQY…EDDD. The span at 68-80 shows a compositional bias: polar residues; the sequence is PPISNTSSPVINS. Composition is skewed to low complexity over residues 81–117, 125–164, 181–197, and 225–238; these read NNNNNNNNNNNNNNNNNNNNNNNNNNNNNNNNNNNNN, TSTSSLLSNNNLMSTQTQQSSSSSSSSSLSSKSNSNSDFM, YAKQQQQQQSTQTKYQS, and QQQQQQQQQQQQQD. Over residues 239–290 the composition is skewed to acidic residues; it reads FEFEEEEEEEDQQQQYDEEEEEEEEYEEDFYKEDLGEIDDGNVLDISDDEPD. The Kinesin motor domain maps to 453–775; sequence RIRVCVRKRP…LRYADRVKEL (323 aa). Residue 543–550 participates in ATP binding; sequence GQTGSGKT. Low complexity-rich tracts occupy residues 826–839, 849–906, and 981–1009; these read INSQQPIIQQTSQP, QQQE…QTQP, and PIQQQQQQQQPIQQQQQSTPQPSQLQTPQ. Disordered stretches follow at residues 826–915 and 981–1030; these read INSQ…KIDF and PIQQ…SSRN.

Belongs to the TRAFAC class myosin-kinesin ATPase superfamily. Kinesin family.

Its subcellular location is the cytoplasm. It localises to the cytoskeleton. In terms of biological role, microtubule-associated force-producing protein that plays a role in organelle transport. Its motor activity is directed toward the microtubule's plus end. The sequence is that of Kinesin-related protein 6 (kif6) from Dictyostelium discoideum (Social amoeba).